A 335-amino-acid polypeptide reads, in one-letter code: UPF0353 protein MMAR_2288 (335 aa).

The next 2 membrane-spanning stretches (helical) occupy residues 18–38 and 67–87; these read WFFL…VLQL and IPAM…AGPT. In terms of domain architecture, VWFA spans 98–294; that stretch reads VVMLVIDVSQ…AELNSVYASL (197 aa). A helical membrane pass occupies residues 309–329; sequence MGWLRLGALVLVAAALAALLI.

This sequence belongs to the UPF0353 family.

It is found in the cell membrane. The protein is UPF0353 protein MMAR_2288 of Mycobacterium marinum (strain ATCC BAA-535 / M).